We begin with the raw amino-acid sequence, 329 residues long: Phenylalanine--tRNA ligase alpha subunit (329 aa).

Glu253 contributes to the Mg(2+) binding site.

The protein belongs to the class-II aminoacyl-tRNA synthetase family. Phe-tRNA synthetase alpha subunit type 1 subfamily. In terms of assembly, tetramer of two alpha and two beta subunits. It depends on Mg(2+) as a cofactor.

It localises to the cytoplasm. The enzyme catalyses tRNA(Phe) + L-phenylalanine + ATP = L-phenylalanyl-tRNA(Phe) + AMP + diphosphate + H(+). The chain is Phenylalanine--tRNA ligase alpha subunit from Coxiella burnetii (strain CbuK_Q154) (Coxiella burnetii (strain Q154)).